A 113-amino-acid polypeptide reads, in one-letter code: Hydrogenase maturation factor HypA (113 aa).

His-2 provides a ligand contact to Ni(2+). Zn(2+)-binding residues include Cys-73, Cys-76, Cys-89, and Cys-92.

It belongs to the HypA/HybF family.

In terms of biological role, involved in the maturation of [NiFe] hydrogenases. Required for nickel insertion into the metal center of the hydrogenase. The sequence is that of Hydrogenase maturation factor HypA from Paracoccus denitrificans (strain Pd 1222).